We begin with the raw amino-acid sequence, 76 residues long: Small ribosomal subunit protein bS18 (76 aa).

It belongs to the bacterial ribosomal protein bS18 family. As to quaternary structure, part of the 30S ribosomal subunit. Forms a tight heterodimer with protein bS6.

Binds as a heterodimer with protein bS6 to the central domain of the 16S rRNA, where it helps stabilize the platform of the 30S subunit. The protein is Small ribosomal subunit protein bS18 of Nitrosomonas europaea (strain ATCC 19718 / CIP 103999 / KCTC 2705 / NBRC 14298).